Consider the following 302-residue polypeptide: Methionyl-tRNA formyltransferase (302 aa).

Residue 109–112 (SILP) coordinates (6S)-5,6,7,8-tetrahydrofolate.

This sequence belongs to the Fmt family.

The enzyme catalyses L-methionyl-tRNA(fMet) + (6R)-10-formyltetrahydrofolate = N-formyl-L-methionyl-tRNA(fMet) + (6S)-5,6,7,8-tetrahydrofolate + H(+). In terms of biological role, attaches a formyl group to the free amino group of methionyl-tRNA(fMet). The formyl group appears to play a dual role in the initiator identity of N-formylmethionyl-tRNA by promoting its recognition by IF2 and preventing the misappropriation of this tRNA by the elongation apparatus. This chain is Methionyl-tRNA formyltransferase, found in Campylobacter hominis (strain ATCC BAA-381 / DSM 21671 / CCUG 45161 / LMG 19568 / NCTC 13146 / CH001A).